Reading from the N-terminus, the 287-residue chain is Pantothenate synthetase (287 aa).

30-37 (MGNLHSGH) contacts ATP. Catalysis depends on H37, which acts as the Proton donor. A (R)-pantoate-binding site is contributed by Q61. Q61 contacts beta-alanine. Residue 149-152 (GEKD) coordinates ATP. Residue Q155 coordinates (R)-pantoate. Residues V178 and 186 to 189 (LSSR) contribute to the ATP site.

It belongs to the pantothenate synthetase family. As to quaternary structure, homodimer.

It localises to the cytoplasm. It carries out the reaction (R)-pantoate + beta-alanine + ATP = (R)-pantothenate + AMP + diphosphate + H(+). Its pathway is cofactor biosynthesis; (R)-pantothenate biosynthesis; (R)-pantothenate from (R)-pantoate and beta-alanine: step 1/1. Functionally, catalyzes the condensation of pantoate with beta-alanine in an ATP-dependent reaction via a pantoyl-adenylate intermediate. The polypeptide is Pantothenate synthetase (Pseudomonas entomophila (strain L48)).